Reading from the N-terminus, the 246-residue chain is DNA repair protein RecO (246 aa).

The protein belongs to the RecO family.

Involved in DNA repair and RecF pathway recombination. The protein is DNA repair protein RecO of Proteus mirabilis (strain HI4320).